The primary structure comprises 133 residues: Putative biopolymer transport protein ExbD-like 1 (133 aa).

The Cytoplasmic portion of the chain corresponds to 1–15 (MNYDNYWDEDKPELN). Residues 16–32 (ITPLVDVMLVLLAILMV) form a helical membrane-spanning segment. Residues 33–133 (TTPTLTYKEE…FLKVSLITSP (101 aa)) are Periplasmic-facing.

Belongs to the ExbD/TolR family.

The protein localises to the cell inner membrane. This is Putative biopolymer transport protein ExbD-like 1 from Helicobacter pylori (strain J99 / ATCC 700824) (Campylobacter pylori J99).